The primary structure comprises 169 residues: MADCTTMRLASSVTIILLLLVASQALVVSGESSSSAMQSKTLNMNKLLNISEDHSPNGGRHWMQRMQPDSCSEQNVVVYQNNAEHLPSGIPTYSVEIINVCTACTVYDVHISCGEFASAELVDPSQFQRIGFNDCLVKGGGRLGPSEAVSFQYSNSFAYPLAVANVACE.

A signal peptide spans 1-25 (MADCTTMRLASSVTIILLLLVASQA).

In terms of tissue distribution, expressed in roots, and at low levels in anthers during meiosis.

May play a role during anther development. This chain is TPD1 protein homolog 1B, found in Oryza sativa subsp. japonica (Rice).